A 219-amino-acid chain; its full sequence is Small ribosomal subunit protein uS3c (219 aa).

One can recognise a KH type-2 domain in the interval 39–111; sequence IRKFLMEKIK…NSFFNVKINF (73 aa).

It belongs to the universal ribosomal protein uS3 family. In terms of assembly, part of the 30S ribosomal subunit.

The protein localises to the plastid. The sequence is that of Small ribosomal subunit protein uS3c (rps3) from Euglena longa (Euglenophycean alga).